The primary structure comprises 225 residues: DNA repair and recombination protein RadB (225 aa).

This sequence belongs to the eukaryotic RecA-like protein family. RadB subfamily.

Its function is as follows. Involved in DNA repair and in homologous recombination. May regulate the cleavage reactions of the branch-structured DNA. Has a very weak ATPase activity that is not stimulated by DNA. Binds DNA but does not promote DNA strands exchange. This chain is DNA repair and recombination protein RadB, found in Methanococcoides burtonii (strain DSM 6242 / NBRC 107633 / OCM 468 / ACE-M).